We begin with the raw amino-acid sequence, 355 residues long: 3-dehydroquinate synthase (355 aa).

Residues 66–71 (SGETTK), 100–104 (GATGD), 124–125 (TT), Lys-136, Lys-145, and 163–166 (FLET) each bind NAD(+). Zn(2+) contacts are provided by Glu-178, His-242, and His-256.

This sequence belongs to the sugar phosphate cyclases superfamily. Dehydroquinate synthase family. Co(2+) serves as cofactor. The cofactor is Zn(2+). It depends on NAD(+) as a cofactor.

It is found in the cytoplasm. The enzyme catalyses 7-phospho-2-dehydro-3-deoxy-D-arabino-heptonate = 3-dehydroquinate + phosphate. Its pathway is metabolic intermediate biosynthesis; chorismate biosynthesis; chorismate from D-erythrose 4-phosphate and phosphoenolpyruvate: step 2/7. Its function is as follows. Catalyzes the conversion of 3-deoxy-D-arabino-heptulosonate 7-phosphate (DAHP) to dehydroquinate (DHQ). This is 3-dehydroquinate synthase from Staphylococcus saprophyticus subsp. saprophyticus (strain ATCC 15305 / DSM 20229 / NCIMB 8711 / NCTC 7292 / S-41).